A 463-amino-acid polypeptide reads, in one-letter code: Minor capsid protein L2 (463 aa).

Residues 1–12 (MAHSRARRRKRA) carry the Nuclear localization signal motif. A disulfide bridge connects residues C21 and C27. Residues 446 to 454 (FTRKRRKRV) carry the Nuclear localization signal motif.

Belongs to the papillomaviridae L2 protein family. In terms of assembly, interacts with major capsid protein L1. Interacts with E2; this interaction inhibits E2 transcriptional activity but not the DNA replication function E2. Interacts with host GADD45GIP1. Interacts with host HSPA8; this interaction is required for L2 nuclear translocation. Interacts with host importins KPNB2 and KPNB3. Forms a complex with importin alpha2-beta1 heterodimers via interaction with the importin alpha2 adapter. Interacts with host DYNLT1; this interaction is essential for virus intracellular transport during entry. Interacts (via C-terminus) with host retromer subunits VPS35 and VPS29. Highly phosphorylated.

Its subcellular location is the virion. The protein resides in the host nucleus. The protein localises to the host early endosome. It localises to the host Golgi apparatus. In terms of biological role, minor protein of the capsid that localizes along the inner surface of the virion, within the central cavities beneath the L1 pentamers. Plays a role in capsid stabilization through interaction with the major capsid protein L1. Once the virion enters the host cell, L2 escorts the genomic DNA into the nucleus by promoting escape from the endosomal compartments and traffic through the host Golgi network. Mechanistically, the C-terminus of L2 possesses a cell-penetrating peptide that protudes from the host endosome, interacts with host cytoplasmic retromer cargo and thereby mediates the capsid delivery to the host trans-Golgi network. Plays a role through its interaction with host dynein in the intracellular microtubule-dependent transport of viral capsid toward the nucleus. Mediates the viral genome import into the nucleus through binding to host importins. Once within the nucleus, L2 localizes viral genomes to host PML bodies in order to activate early gene expression for establishment of infection. Later on, promotes late gene expression by interacting with the viral E2 protein and by inhibiting its transcriptional activation functions. During virion assembly, encapsidates the genome by direct interaction with the viral DNA. This Homo sapiens (Human) protein is Minor capsid protein L2.